The sequence spans 1993 residues: Otoferlin (1993 aa).

The C2 1 domain occupies 1–98; sequence MALIVHLKTV…VEENRVEVSD (98 aa). Topologically, residues 1–1959 are cytoplasmic; the sequence is MALIVHLKTV…IKYLICTRYK (1959 aa). Residues 127-212 are disordered; it reads PWDDGDFLGD…KEEPQRQDEP (86 aa). Over residues 129–145 the composition is skewed to acidic residues; the sequence is DDGDFLGDESLQEEEKD. Basic and acidic residues-rich tracts occupy residues 163–186 and 202–211; these read PGEK…EHKA and HKEEPQRQDE. C2 domains lie at 251–372 and 415–546; these read KRSK…HKWA and IEGN…FLPT. Residues 654-708 are disordered; the sequence is NYGNEVDGTSRPQRPRPRKEPGDEEEVDLIQNSSDDEGDEAGDLASVSSTPPMRP. Acidic residues predominate over residues 675–695; the sequence is GDEEEVDLIQNSSDDEGDEAG. A coiled-coil region spans residues 807 to 836; sequence RERLKSCMRELESMGQQAKSLRAQVKRHTV. C2 domains lie at 959 to 1084 and 1131 to 1257; these read LHSF…PPRF and RGPI…ANWN. Positions 991, 997, 1053, 1055, and 1061 each coordinate Ca(2+). Disordered regions lie at residues 1294 to 1318 and 1339 to 1398; these read AEDE…EEPD and LRQH…EKKK. The segment covering 1348-1357 has biased composition (acidic residues); that stretch reads DLEEKEEMDS. The span at 1366–1379 shows a compositional bias: basic and acidic residues; the sequence is KNKEKSRAAKEEKK. 2 C2 domains span residues 1460–1589 and 1710–1861; these read LPED…ATCG and DMPA…KQCT. Ca(2+) contacts are provided by D1504, D1510, D1559, D1561, D1567, D1832, S1835, and D1838. Residues 1960-1980 traverse the membrane as a helical segment; the sequence is WLIIKIVLALLGLLMLALFLY. Topologically, residues 1981 to 1993 are extracellular; it reads SLPGYMVKKLLGA.

Belongs to the ferlin family. In terms of assembly, interacts with SNAP25; the interaction is direct. Interacts with STX1; the interaction is direct. Interacts with RAB8B. It depends on Ca(2+) as a cofactor. In terms of tissue distribution, isoform 1 is expressed in the cochlea and brain. Expressed in cerebellum (Purkinje cells), hippocampus (granule cells of the dentate gyrus and in pyramidal cells of the CA1-CA3 region) and cortex (stellate and pyramidal cells). Expressed in hair cells of vestibular organs such as the saccule, utricle and crista ampullari. Expressed in the cochlear inner and outer cells (IHCs and OHCs) (at protein level). Expressed in brain: brainstem, cerebellum (granules cells and Purkinje cell layer), cortex (layers IV and V), inferior colliculus, superior colliculus and hippocampus (granule cells of the dentate gyrus and in pyramidal cells of the CA1-CA3 region).

It localises to the cytoplasmic vesicle. It is found in the secretory vesicle. The protein localises to the synaptic vesicle membrane. Its subcellular location is the basolateral cell membrane. The protein resides in the endoplasmic reticulum membrane. It localises to the golgi apparatus membrane. It is found in the presynaptic cell membrane. The protein localises to the cell membrane. Key calcium ion sensor involved in the Ca(2+)-triggered synaptic vesicle-plasma membrane fusion and in the control of neurotransmitter release at these output synapses. Interacts in a calcium-dependent manner to the presynaptic SNARE proteins at ribbon synapses of cochlear inner hair cells (IHCs) to trigger exocytosis of neurotransmitter. Also essential to synaptic exocytosis in immature outer hair cells (OHCs). May also play a role within the recycling of endosomes. This Rattus norvegicus (Rat) protein is Otoferlin (Otof).